The chain runs to 320 residues: MVKKIGVLTSGGDAPGMNAAVRGVVRTALTEGLEVFGIHDGYLGLVEDRIEKLERHSVSDMINRGGTFLGSARFPEFKEVAVREKAIENLKKHDIDALIVIGGDGSYMGAKKLTEMGYPCIGLPGTIDNDIAGTDYTIGYLTALNTVIDAIDRLRDTSSSHQRISIVEVMGRHCGDLTLMSAIAGGCEYVITPETGLNKEALIQNIQDGIAKGKKHAIIAITELMTDVNQLAKEIEAETGRETRATVLGHIQRGGQPGAFDRILASRMGNYGVKLLIDGHGGRCVGIQNEQLVHHDIIDAIENMRRPEKLELYKVAEELF.

Gly12 is a binding site for ATP. 22–26 provides a ligand contact to ADP; the sequence is RGVVR. Residues 73 to 74 and 103 to 106 each bind ATP; these read RF and GDGS. A Mg(2+)-binding site is contributed by Asp104. Position 126-128 (126-128) interacts with substrate; sequence TID. Asp128 (proton acceptor) is an active-site residue. Residue Arg155 coordinates ADP. Substrate is bound by residues Arg163 and 170–172; that span reads MGR. Residues 186–188, Lys212, and 214–216 contribute to the ADP site; these read GCE and KKH. Substrate contacts are provided by residues Glu223, Arg244, and 250 to 253; that span reads HIQR.

It belongs to the phosphofructokinase type A (PFKA) family. ATP-dependent PFK group I subfamily. Prokaryotic clade 'B1' sub-subfamily. In terms of assembly, homotetramer. Mg(2+) serves as cofactor.

Its subcellular location is the cytoplasm. It catalyses the reaction beta-D-fructose 6-phosphate + ATP = beta-D-fructose 1,6-bisphosphate + ADP + H(+). Its pathway is carbohydrate degradation; glycolysis; D-glyceraldehyde 3-phosphate and glycerone phosphate from D-glucose: step 3/4. Its activity is regulated as follows. Allosterically activated by ADP and other diphosphonucleosides, and allosterically inhibited by phosphoenolpyruvate. Functionally, catalyzes the phosphorylation of D-fructose 6-phosphate to fructose 1,6-bisphosphate by ATP, the first committing step of glycolysis. The protein is ATP-dependent 6-phosphofructokinase of Aliivibrio fischeri (strain ATCC 700601 / ES114) (Vibrio fischeri).